The primary structure comprises 288 residues: Ribosomal RNA small subunit methyltransferase A (288 aa).

Residues Asn28, Leu30, Gly55, Glu76, Asp101, and Asn130 each coordinate S-adenosyl-L-methionine.

This sequence belongs to the class I-like SAM-binding methyltransferase superfamily. rRNA adenine N(6)-methyltransferase family. RsmA subfamily.

The protein localises to the cytoplasm. The catalysed reaction is adenosine(1518)/adenosine(1519) in 16S rRNA + 4 S-adenosyl-L-methionine = N(6)-dimethyladenosine(1518)/N(6)-dimethyladenosine(1519) in 16S rRNA + 4 S-adenosyl-L-homocysteine + 4 H(+). Functionally, specifically dimethylates two adjacent adenosines (A1518 and A1519) in the loop of a conserved hairpin near the 3'-end of 16S rRNA in the 30S particle. May play a critical role in biogenesis of 30S subunits. In Moorella thermoacetica (strain ATCC 39073 / JCM 9320), this protein is Ribosomal RNA small subunit methyltransferase A.